We begin with the raw amino-acid sequence, 702 residues long: Polyribonucleotide nucleotidyltransferase (702 aa).

D486 and D492 together coordinate Mg(2+). The region spanning 553-612 (PSMATIKIDPEKIRDVIGKGGATIRSITEQTGASIDLDDDGTVRIYAADKASSDAALLKI) is the KH domain. One can recognise an S1 motif domain in the interval 622 to 690 (DKLYKGKVVR…ARGRIKLSMK (69 aa)).

Belongs to the polyribonucleotide nucleotidyltransferase family. As to quaternary structure, component of the RNA degradosome, which is a multiprotein complex involved in RNA processing and mRNA degradation. Mg(2+) is required as a cofactor.

It localises to the cytoplasm. It catalyses the reaction RNA(n+1) + phosphate = RNA(n) + a ribonucleoside 5'-diphosphate. Its function is as follows. Involved in mRNA degradation. Catalyzes the phosphorolysis of single-stranded polyribonucleotides processively in the 3'- to 5'-direction. This chain is Polyribonucleotide nucleotidyltransferase, found in Marinomonas sp. (strain MWYL1).